A 184-amino-acid chain; its full sequence is MSRIAKKPIVLPTNVQLSITDSEIKVKGPKGELKLNNHPFVSIKVEGNEVWVTPNLEVAKRKADERKFKAMVGTYWRLIRNMVLGVTEGFKKELEIVGVGYRAQLQGNKLIMNLGYAHQVEFDVPADVKVEVPAPNKIIVSGIDKQRVGQVAADIRKWREPNPYSGKGIKYVDEVLKLKEGKKA.

Belongs to the universal ribosomal protein uL6 family. In terms of assembly, part of the 50S ribosomal subunit.

Its function is as follows. This protein binds to the 23S rRNA, and is important in its secondary structure. It is located near the subunit interface in the base of the L7/L12 stalk, and near the tRNA binding site of the peptidyltransferase center. This Fervidobacterium nodosum (strain ATCC 35602 / DSM 5306 / Rt17-B1) protein is Large ribosomal subunit protein uL6.